The following is a 386-amino-acid chain: Succinyl-diaminopimelate desuccinylase (386 aa).

H72 is a Zn(2+) binding site. D74 is a catalytic residue. Residue D105 coordinates Zn(2+). The Proton acceptor role is filled by E139. Positions 140, 168, and 353 each coordinate Zn(2+).

Belongs to the peptidase M20A family. DapE subfamily. As to quaternary structure, homodimer. The cofactor is Zn(2+). Requires Co(2+) as cofactor.

It carries out the reaction N-succinyl-(2S,6S)-2,6-diaminopimelate + H2O = (2S,6S)-2,6-diaminopimelate + succinate. The protein operates within amino-acid biosynthesis; L-lysine biosynthesis via DAP pathway; LL-2,6-diaminopimelate from (S)-tetrahydrodipicolinate (succinylase route): step 3/3. In terms of biological role, catalyzes the hydrolysis of N-succinyl-L,L-diaminopimelic acid (SDAP), forming succinate and LL-2,6-diaminopimelate (DAP), an intermediate involved in the bacterial biosynthesis of lysine and meso-diaminopimelic acid, an essential component of bacterial cell walls. The sequence is that of Succinyl-diaminopimelate desuccinylase from Rhodospirillum centenum (strain ATCC 51521 / SW).